Consider the following 476-residue polypeptide: Lactate utilization protein B (476 aa).

4Fe-4S ferredoxin-type domains follow at residues 304-334 (GTEFQPVLQCIRCAACVNVCPVYRHIGGHSY) and 353-382 (YDDYKELPYASSLCAACTEACPVKIPLHEL). Cys-313, Cys-316, Cys-319, Cys-323, Cys-366, Cys-369, and Cys-373 together coordinate [4Fe-4S] cluster. The disordered stretch occupies residues 440 to 476 (KGPGPLKAWTESREFPAPSKERFRDWFQTRQKGGNPS). Residues 449-466 (TESREFPAPSKERFRDWF) are compositionally biased toward basic and acidic residues. Positions 467–476 (QTRQKGGNPS) are enriched in polar residues.

The protein belongs to the LutB/YkgF family.

Its function is as follows. Is involved in L-lactate degradation and allows cells to grow with lactate as the sole carbon source. Has probably a role as an electron transporter during oxidation of L-lactate. The protein is Lactate utilization protein B of Geobacillus kaustophilus (strain HTA426).